Reading from the N-terminus, the 169-residue chain is NAD(P)H-quinone oxidoreductase subunit J, chloroplastic (169 aa).

It belongs to the complex I 30 kDa subunit family. NDH is composed of at least 16 different subunits, 5 of which are encoded in the nucleus.

It localises to the plastid. The protein resides in the chloroplast thylakoid membrane. The enzyme catalyses a plastoquinone + NADH + (n+1) H(+)(in) = a plastoquinol + NAD(+) + n H(+)(out). It carries out the reaction a plastoquinone + NADPH + (n+1) H(+)(in) = a plastoquinol + NADP(+) + n H(+)(out). NDH shuttles electrons from NAD(P)H:plastoquinone, via FMN and iron-sulfur (Fe-S) centers, to quinones in the photosynthetic chain and possibly in a chloroplast respiratory chain. The immediate electron acceptor for the enzyme in this species is believed to be plastoquinone. Couples the redox reaction to proton translocation, and thus conserves the redox energy in a proton gradient. The polypeptide is NAD(P)H-quinone oxidoreductase subunit J, chloroplastic (Anthoceros angustus (Hornwort)).